Reading from the N-terminus, the 144-residue chain is MWLQNLLLLGTVVCSISAPTRPPSPVTRPWQHVDAIKEALSLLNNSNDTAAVMNETVDVVCEMFDPQEPTCVQTRLNLYKQGLRGSLTRLKSPLTLLAKHYEQHCPLTEETSCETQSITFKSFKDSLNKFLFTIPFDCWGPVKK.

The first 17 residues, 1-17, serve as a signal peptide directing secretion; it reads MWLQNLLLLGTVVCSIS. An O-linked (GalNAc...) serine glycan is attached at S24. O-linked (GalNAc...) threonine glycosylation occurs at T27. N-linked (GlcNAc...) asparagine glycosylation is found at N44, N47, and N54. 2 cysteine pairs are disulfide-bonded: C71/C113 and C105/C138.

Belongs to the GM-CSF family. Monomer. The signaling GM-CSF receptor complex is a dodecamer of two head-to-head hexamers of two alpha, two beta, and two ligand subunits.

It localises to the secreted. Functionally, cytokine that stimulates the growth and differentiation of hematopoietic precursor cells from various lineages, including granulocytes, macrophages, eosinophils and erythrocytes. In Sus scrofa (Pig), this protein is Granulocyte-macrophage colony-stimulating factor (CSF2).